The chain runs to 409 residues: Peptidase T (409 aa).

Residue histidine 78 coordinates Zn(2+). Aspartate 80 is an active-site residue. Aspartate 139 contacts Zn(2+). The active-site Proton acceptor is glutamate 173. Glutamate 174, aspartate 196, and histidine 378 together coordinate Zn(2+).

It belongs to the peptidase M20B family. Zn(2+) serves as cofactor.

It is found in the cytoplasm. The catalysed reaction is Release of the N-terminal residue from a tripeptide.. Functionally, cleaves the N-terminal amino acid of tripeptides. This chain is Peptidase T, found in Shewanella sediminis (strain HAW-EB3).